The following is a 200-amino-acid chain: Phospholipase A2 inhibitor NAI (200 aa).

The first 19 residues, 1–19 (MKSLLFCCLFGTFLATGMC), serve as a signal peptide directing secretion. 8 cysteine pairs are disulfide-bonded: Cys-22-Cys-46, Cys-25-Cys-32, Cys-39-Cys-67, Cys-73-Cys-94, Cys-95-Cys-100, Cys-120-Cys-145, Cys-138-Cys-165, and Cys-171-Cys-191.

This sequence belongs to the CNF-like-inhibitor family. As to quaternary structure, heterotrimer of 2 subunits A and 1 subunit B; non-covalently linked. Expressed by the liver.

The protein localises to the secreted. Inhibits the enzymatic activity of all phospholipase A2 tested, binding with micromole to nanomole affinity. The sequence is that of Phospholipase A2 inhibitor NAI from Notechis ater (Black tiger snake).